A 222-amino-acid polypeptide reads, in one-letter code: Phosphoribosylformylglycinamidine synthase subunit PurQ (222 aa).

A Glutamine amidotransferase type-1 domain is found at 3–222 (AAVLVFPGSN…ASLAAALVAA (220 aa)). Cysteine 86 serves as the catalytic Nucleophile. Residues histidine 194 and glutamate 196 contribute to the active site.

Part of the FGAM synthase complex composed of 1 PurL, 1 PurQ and 2 PurS subunits.

It is found in the cytoplasm. The catalysed reaction is N(2)-formyl-N(1)-(5-phospho-beta-D-ribosyl)glycinamide + L-glutamine + ATP + H2O = 2-formamido-N(1)-(5-O-phospho-beta-D-ribosyl)acetamidine + L-glutamate + ADP + phosphate + H(+). It catalyses the reaction L-glutamine + H2O = L-glutamate + NH4(+). The protein operates within purine metabolism; IMP biosynthesis via de novo pathway; 5-amino-1-(5-phospho-D-ribosyl)imidazole from N(2)-formyl-N(1)-(5-phospho-D-ribosyl)glycinamide: step 1/2. Its function is as follows. Part of the phosphoribosylformylglycinamidine synthase complex involved in the purines biosynthetic pathway. Catalyzes the ATP-dependent conversion of formylglycinamide ribonucleotide (FGAR) and glutamine to yield formylglycinamidine ribonucleotide (FGAM) and glutamate. The FGAM synthase complex is composed of three subunits. PurQ produces an ammonia molecule by converting glutamine to glutamate. PurL transfers the ammonia molecule to FGAR to form FGAM in an ATP-dependent manner. PurS interacts with PurQ and PurL and is thought to assist in the transfer of the ammonia molecule from PurQ to PurL. The protein is Phosphoribosylformylglycinamidine synthase subunit PurQ of Jannaschia sp. (strain CCS1).